Consider the following 389-residue polypeptide: Methylthioribose kinase (389 aa).

ATP contacts are provided by residues Asn37, Lys52, and Glu106–Leu108. Asp224 is a binding site for substrate. Asp241 to Glu243 lines the ATP pocket. Substrate is bound at residue Arg331.

The protein belongs to the methylthioribose kinase family. Homodimer.

It catalyses the reaction 5-(methylsulfanyl)-D-ribose + ATP = 5-(methylsulfanyl)-alpha-D-ribose 1-phosphate + ADP + H(+). It participates in amino-acid biosynthesis; L-methionine biosynthesis via salvage pathway; S-methyl-5-thio-alpha-D-ribose 1-phosphate from S-methyl-5'-thioadenosine (hydrolase route): step 2/2. Its function is as follows. Catalyzes the phosphorylation of methylthioribose into methylthioribose-1-phosphate. The protein is Methylthioribose kinase of Exiguobacterium sibiricum (strain DSM 17290 / CCUG 55495 / CIP 109462 / JCM 13490 / 255-15).